A 459-amino-acid polypeptide reads, in one-letter code: NADH oxidase (459 aa).

N10 contributes to the FAD binding site. Catalysis depends on H11, which acts as the Proton acceptor. Positions 12, 34, 35, 44, 81, 110, 113, 143, and 172 each coordinate FAD. The active-site Redox-active is C44. Residue C44 is modified to Cysteine sulfinic acid (-SO2H). Positions 173, 192, 201, and 256 each coordinate NAD(+). D294 is a binding site for FAD. An NAD(+)-binding site is contributed by A310. The FAD site is built by L311, A312, and S313. NAD(+) is bound at residue G341. F439 contacts FAD.

The protein belongs to the class-III pyridine nucleotide-disulfide oxidoreductase family. Requires FAD as cofactor.

It is found in the secreted. The protein localises to the cell wall. The catalysed reaction is 2 NADH + O2 + 2 H(+) = 2 NAD(+) + 2 H2O. Functionally, catalyzes the four-electron reduction of molecular oxygen to water. Plays a role in redox balance maintenance. May be involved in mediating bacterial adhesion to host cells. May be considered a potential virulence factor. In Streptococcus pneumoniae serotype 4 (strain ATCC BAA-334 / TIGR4), this protein is NADH oxidase.